The primary structure comprises 251 residues: Probable transcriptional regulatory protein Arth_2304 (251 aa).

The protein belongs to the TACO1 family.

Its subcellular location is the cytoplasm. This is Probable transcriptional regulatory protein Arth_2304 from Arthrobacter sp. (strain FB24).